The primary structure comprises 414 residues: 3-ketoacyl-CoA thiolase, peroxisomal (414 aa).

A peroxisome-targeting transit peptide spans 1–9 (MDRLNNLAT). The interval 1–9 (MDRLNNLAT) is PTS2-type peroxisomal targeting signal. Cys115 functions as the Acyl-thioester intermediate in the catalytic mechanism. Catalysis depends on proton acceptor residues His370 and Cys400.

This sequence belongs to the thiolase-like superfamily. Thiolase family. In terms of assembly, homodimer. Interacts (via PTS2-type peroxisomal targeting signal region) with PEX7; leading to its translocation into peroxisomes.

It is found in the peroxisome. The catalysed reaction is an acyl-CoA + acetyl-CoA = a 3-oxoacyl-CoA + CoA. It functions in the pathway lipid metabolism; fatty acid metabolism. Functionally, responsible for the thiolytic cleavage of straight chain 3-keto fatty acyl-CoAs (3-oxoacyl-CoAs). The chain is 3-ketoacyl-CoA thiolase, peroxisomal (POT1) from Yarrowia lipolytica (strain CLIB 122 / E 150) (Yeast).